The sequence spans 465 residues: Cysteine--tRNA ligase (465 aa).

Zn(2+) is bound at residue Cys30. Residues 32–42 (ITVYDYCHVGH) carry the 'HIGH' region motif. The Zn(2+) site is built by Cys214, His239, and Glu243. Residues 271 to 275 (KMSKS) carry the 'KMSKS' region motif. Lys274 serves as a coordination point for ATP.

The protein belongs to the class-I aminoacyl-tRNA synthetase family. As to quaternary structure, monomer. The cofactor is Zn(2+).

The protein localises to the cytoplasm. The catalysed reaction is tRNA(Cys) + L-cysteine + ATP = L-cysteinyl-tRNA(Cys) + AMP + diphosphate. This Burkholderia ambifaria (strain ATCC BAA-244 / DSM 16087 / CCUG 44356 / LMG 19182 / AMMD) (Burkholderia cepacia (strain AMMD)) protein is Cysteine--tRNA ligase.